We begin with the raw amino-acid sequence, 115 residues long: MDARQAAALLLVLLLVTDWSHAEGPGGRDGGDQIFMEEDSGAHPAQDAQTPRSLLRSLLQAMQRPGRSPAFLFQPQRFGRNTRGSWSNKRLSPRAGEGLSSPFWSLAAPQRFGKK.

The first 22 residues, 1–22, serve as a signal peptide directing secretion; the sequence is MDARQAAALLLVLLLVTDWSHA. Disordered stretches follow at residues 20-51 and 78-102; these read SHAEGPGGRDGGDQIFMEEDSGAHPAQDAQTP and FGRNTRGSWSNKRLSPRAGEGLSSP. Residues 23 to 66 constitute a propeptide that is removed on maturation; that stretch reads EGPGGRDGGDQIFMEEDSGAHPAQDAQTPRSLLRSLLQAMQRPG. The residue at position 78 (phenylalanine 78) is a Phenylalanine amide. The propeptide occupies 81-94; sequence NTRGSWSNKRLSPR. Phenylalanine 112 is modified (phenylalanine amide).

The protein belongs to the FARP (FMRFamide related peptide) family.

The protein localises to the secreted. In terms of biological role, morphine modulating peptides. Have wide-ranging physiologic effects, including the modulation of morphine-induced analgesia, elevation of arterial blood pressure, and increased somatostatin secretion from the pancreas. The neuropeptide FF potentiates and sensitizes ASIC3 cation channel. The polypeptide is Pro-FMRFamide-related neuropeptide FF (NPFF) (Bos taurus (Bovine)).